Consider the following 276-residue polypeptide: MLEILKAVILGIVEGITEFLPISSTGHLVLVDEFIKLNEPKKFIDMFNVVIQLGAIMAVVVLYFHKLNPWSPKKSRLERSQTWTLWKKVIIAVIPSVIIGLPLNDWMDAHLMNWLVVSIALIVYGVLFIVIENHNQNLRPRFDSLNTLPYKVAILIGCFQILSLIPGTSRSGATILGAILIGTSRYVAAEFSFFLAIPTMFGASLLKLYKFFAHGGTLAGNQGLILAVGVIVSFVVAYASIRFLLNYIKTKDFKAFGWYRIILGVIVIAYFALLAH.

The next 8 helical transmembrane spans lie at 2 to 22, 43 to 63, 83 to 103, 111 to 131, 147 to 167, 186 to 206, 224 to 244, and 255 to 275; these read LEIL…FLPI, FIDM…VVLY, WTLW…GLPL, LMNW…FIVI, TLPY…LIPG, YVAA…ASLL, LILA…IRFL, and AFGW…ALLA.

Belongs to the UppP family.

It is found in the cell membrane. It catalyses the reaction di-trans,octa-cis-undecaprenyl diphosphate + H2O = di-trans,octa-cis-undecaprenyl phosphate + phosphate + H(+). In terms of biological role, catalyzes the dephosphorylation of undecaprenyl diphosphate (UPP). Confers resistance to bacitracin. This is Undecaprenyl-diphosphatase from Limosilactobacillus fermentum (strain NBRC 3956 / LMG 18251) (Lactobacillus fermentum).